The chain runs to 338 residues: Fructose-1,6-bisphosphatase 1 (338 aa).

The residue at position 2 (Ala-2) is an N-acetylalanine. Residues 18-22 and 28-32 contribute to the AMP site; these read VMEEG and TGELT. Residues Asp-69 and Glu-98 each contribute to the Mg(2+) site. AMP is bound at residue 113 to 114; it reads KY. Asp-119, Leu-121, and Asp-122 together coordinate Mg(2+). Substrate is bound at residue 122–125; sequence DGSS. Residue Arg-141 participates in AMP binding. Lys-151 bears the N6-succinyllysine mark. Substrate contacts are provided by residues 213–216, 244–249, Tyr-265, and 275–277; these read NEGY, RYVGSM, and KLR. 3 positions are modified to phosphotyrosine: Tyr-216, Tyr-245, and Tyr-265. Position 281 (Glu-281) interacts with Mg(2+).

Belongs to the FBPase class 1 family. As to quaternary structure, homotetramer. Mg(2+) serves as cofactor. As to expression, expressed in pancreatic islets.

It carries out the reaction beta-D-fructose 1,6-bisphosphate + H2O = beta-D-fructose 6-phosphate + phosphate. It functions in the pathway carbohydrate biosynthesis; gluconeogenesis. With respect to regulation, subject to complex allosteric regulation. The enzyme can assume an active R-state, or an inactive T-state. Intermediate conformations may exist. AMP acts as an allosteric inhibitor. AMP binding affects the turnover of bound substrate and not the affinity for substrate. Fructose 2,6-bisphosphate acts as a competitive inhibitor. Fructose 2,6-bisphosphate and AMP have synergistic effects. Its function is as follows. Catalyzes the hydrolysis of fructose 1,6-bisphosphate to fructose 6-phosphate in the presence of divalent cations, acting as a rate-limiting enzyme in gluconeogenesis. Plays a role in regulating glucose sensing and insulin secretion of pancreatic beta-cells. Appears to modulate glycerol gluconeogenesis in liver. Important regulator of appetite and adiposity; increased expression of the protein in liver after nutrient excess increases circulating satiety hormones and reduces appetite-stimulating neuropeptides and thus seems to provide a feedback mechanism to limit weight gain. In Homo sapiens (Human), this protein is Fructose-1,6-bisphosphatase 1 (FBP1).